The chain runs to 257 residues: Diphthine synthase (257 aa).

S-adenosyl-L-methionine-binding positions include Leu9, Asp85, Val88, Ser113 to Ile114, Leu164, Ala207, and His232.

This sequence belongs to the diphthine synthase family. As to quaternary structure, homodimer.

The enzyme catalyses 2-[(3S)-amino-3-carboxypropyl]-L-histidyl-[translation elongation factor 2] + 3 S-adenosyl-L-methionine = diphthine-[translation elongation factor 2] + 3 S-adenosyl-L-homocysteine + 3 H(+). It participates in protein modification; peptidyl-diphthamide biosynthesis. S-adenosyl-L-methionine-dependent methyltransferase that catalyzes the trimethylation of the amino group of the modified target histidine residue in translation elongation factor 2 (EF-2), to form an intermediate called diphthine. The three successive methylation reactions represent the second step of diphthamide biosynthesis. The chain is Diphthine synthase from Methanococcus aeolicus (strain ATCC BAA-1280 / DSM 17508 / OCM 812 / Nankai-3).